The following is a 264-amino-acid chain: MHPPTDLPRWVYLPAIAGIVFVAMPLVAIAIRVDWPRFWALITTPSSQTALLLSVKTAAASTVLCVLLGVPMALVLARSRGRLVRSLRPLILLPLVLPPVVGGIALLYAFGRLGLIGRYLEAAGISIAFSTAAVVLAQTFVSLPYLVISLEGAARTAGADYEVVAATLGARPGTVWWRVTLPLLLPGVVSGSVLAFARSLGEFGATLTFAGSRQGVTRTLPLEIYLQRVTDPDAAVALSLLLVVVAALVVLGVGARTPIGTDTR.

A run of 6 helical transmembrane segments spans residues 11–31 (VYLP…AIAI), 57–77 (TAAA…LVLA), 90–110 (LILL…LYAF), 127–147 (IAFS…PYLV), 176–196 (WWRV…VLAF), and 234–254 (AAVA…LGVG). Positions 51 to 253 (LLLSVKTAAA…VVAALVVLGV (203 aa)) constitute an ABC transmembrane type-1 domain.

This sequence belongs to the binding-protein-dependent transport system permease family. CysTW subfamily.

The protein resides in the cell membrane. Its function is as follows. Part of the binding-protein-dependent transport system ModABCD for molybdenum; probably responsible for the translocation of the substrate across the membrane. This is Molybdenum transport system permease protein ModB (modB) from Mycobacterium bovis (strain ATCC BAA-935 / AF2122/97).